Reading from the N-terminus, the 463-residue chain is A-type ATP synthase subunit B (463 aa).

This sequence belongs to the ATPase alpha/beta chains family. As to quaternary structure, has multiple subunits with at least A(3), B(3), C, D, E, F, H, I and proteolipid K(x).

Its subcellular location is the cell membrane. Functionally, component of the A-type ATP synthase that produces ATP from ADP in the presence of a proton gradient across the membrane. The B chain is a regulatory subunit. The polypeptide is A-type ATP synthase subunit B (Thermococcus gammatolerans (strain DSM 15229 / JCM 11827 / EJ3)).